A 477-amino-acid chain; its full sequence is MAQRYDELPHYGGMDGVGVPASMYGDPHAPRPIPPVHHLNHGPPLHATQHYGAHAPHPNVMPASMGSAVNDALKRDKDAIYGHPLFPLLALVFEKCELATCTPREPGVAGGDVCSSDSFNEDIAVFAKQVRAEKPLFSSNPELDNLMIQAIQVLRFHLLELEKVHELCDNFCHRYISCLKGKMPIDLVIDERDGSSKSDHEELSGSSTNLADHNPSSWRDHDDATSTHSAGTPGPSSGGHASQSGDNSSEQGDGLDNSVASPGTGDDDDPDKDKKRQKKRGIFPKVATNIMRAWLFQHLTHPYPSEEQKKQLAQDTGLTILQVNNWFINARRRIVQPMIDQSNRAGFLLDPSVSQGAAYSPEGQPMGSFVLDGQQHMGIRPAGLQSMPGDYVSQGGPMGMSMAQPSYTPPQMTPHPTQLRHGPPMHSYLPSHPHHPAMMMHGGPPTHPGMTMSAQSPTMLNSVDPNVGGQVMDIHAQ.

The tract at residues 71–191 (DALKRDKDAI…KMPIDLVIDE (121 aa)) is required for interaction with PBX1. Positions 110 to 193 (GGDVCSSDSF…PIDLVIDERD (84 aa)) constitute an MEIS N-terminal domain. Residues 193 to 203 (DGSSKSDHEEL) are compositionally biased toward basic and acidic residues. The tract at residues 193–283 (DGSSKSDHEE…KKRQKKRGIF (91 aa)) is disordered. Polar residues-rich tracts occupy residues 204–217 (SGSS…NPSS) and 239–251 (GHAS…SSEQ). A DNA-binding region (homeobox; TALE-type) is located at residues 276–338 (RQKKRGIFPK…NARRRIVQPM (63 aa)). Residues 299-333 (LTHPYPSEEQKKQLAQDTGLTILQVNNWFINARRR) are interaction with DNA. The tract at residues 340 to 477 (DQSNRAGFLL…GGQVMDIHAQ (138 aa)) is transcriptional activation domain.

Belongs to the TALE/MEIS homeobox family. Monomer and homodimer. Heterodimer with HOXB13. Isoform 2 interacts with TLX1. Isoform 3 interacts with HOXA13 and PBX1 isoform PBX1b. Isoform 4 interacts with SP1, SP3 and KLF4. Isoform 4 and isoform 5 interact with PBX1 isoform PBX1a; the interaction partially relieves MEIS2 autoinhibition. Isoform 3 also known as MEIS2b is part of a PDX1:PBX1b:Meis2B complex; Meis2B is recruited by PBX1b and can be replaced by isoform 4 in a small fraction of complexes. Can form trimeric complexes including HOXB8 and PBX2 or PBX3. As to expression, expressed in various tissues. Expressed at high level in the lymphoid organs of hematopoietic tissues. Also expressed in some regions of the brain, such as the putamen.

The protein localises to the nucleus. It localises to the cytoplasm. Its subcellular location is the perinuclear region. Functionally, involved in transcriptional regulation. Binds to HOX or PBX proteins to form dimers, or to a DNA-bound dimer of PBX and HOX proteins and thought to have a role in stabilization of the homeoprotein-DNA complex. Isoform 3 is required for the activity of a PDX1:PBX1b:MEIS2b complex in pancreatic acinar cells involved in the transcriptional activation of the ELA1 enhancer; the complex binds to the enhancer B element and cooperates with the transcription factor 1 complex (PTF1) bound to the enhancer A element; MEIS2 is not involved in complex DNA-binding. Probably in complex with PBX1, is involved in transcriptional regulation by KLF4. Isoform 3 and isoform 4 can bind to a EPHA8 promoter sequence containing the DNA motif 5'-CGGTCA-3'; in cooperation with a PBX protein (such as PBX2) is proposed to be involved in the transcriptional activation of EPHA8 in the developing midbrain. May be involved in regulation of myeloid differentiation. Can bind to the DNA sequence 5'-TGACAG-3'in the activator ACT sequence of the D(1A) dopamine receptor (DRD1) promoter and activate DRD1 transcription; isoform 5 cannot activate DRD1 transcription. In Homo sapiens (Human), this protein is Homeobox protein Meis2 (MEIS2).